A 225-amino-acid polypeptide reads, in one-letter code: 3-dehydroquinate dehydratase (225 aa).

3-dehydroquinate is bound by residues 30–32 and Arg-62; that span reads EWR. His-118 functions as the Proton donor/acceptor in the catalytic mechanism. Lys-143 (schiff-base intermediate with substrate) is an active-site residue. 2 residues coordinate 3-dehydroquinate: Arg-186 and Gln-209.

Belongs to the type-I 3-dehydroquinase family. In terms of assembly, homodimer.

The enzyme catalyses 3-dehydroquinate = 3-dehydroshikimate + H2O. It functions in the pathway metabolic intermediate biosynthesis; chorismate biosynthesis; chorismate from D-erythrose 4-phosphate and phosphoenolpyruvate: step 3/7. Its function is as follows. Involved in the third step of the chorismate pathway, which leads to the biosynthesis of aromatic amino acids. Catalyzes the cis-dehydration of 3-dehydroquinate (DHQ) and introduces the first double bond of the aromatic ring to yield 3-dehydroshikimate. This is 3-dehydroquinate dehydratase from Streptococcus agalactiae serotype Ia (strain ATCC 27591 / A909 / CDC SS700).